Consider the following 439-residue polypeptide: Sequestosome-1 (439 aa).

The residue at position 2 (Ala2) is an N-acetylalanine. An interaction with LCK region spans residues Ala2–Arg48. Positions Ser3–Lys100 constitute a PB1 domain. Ser24 is subject to Phosphoserine. The interval Pro41–Arg105 is interaction with PRKCZ and dimerization. The segment at Arg48 to Asp78 is interaction with PAWR. Residues Val119 to Ser221 are interaction with GABRR3. The ZZ-type zinc finger occupies His120–Gly170. Zn(2+) is bound by residues Cys125, Cys128, Cys139, and Cys142. Position 145 is a phosphotyrosine (Tyr145). Residues Cys148, Cys151, His157, and His160 each contribute to the Zn(2+) site. Residues Asn167 to Pro217 are LIM protein-binding. Phosphoserine is present on residues Ser173, Ser175, and Ser204. A disordered region spans residues Gly201–Val231. The TRAF6-binding motif lies at Pro225 to Asn230. Ser246 and Ser263 each carry phosphoserine. Residues Gly259–Ala389 form a disordered region. A compositionally biased stretch (polar residues) spans Leu265–Val292. Position 266 is a phosphothreonine (Thr266). The segment at Thr266–Leu439 is interaction with NTRK1. Ser269 and Ser281 each carry phosphoserine. Cys288 carries S-palmitoyl cysteine lipidation. Phosphoserine occurs at positions 305, 327, and 331. The interval Gln320–Ser341 is MAP1LC3B-binding. The LIR signature appears at Asp335–Leu340. Positions Asp336–Asp346 are enriched in basic and acidic residues. An interaction with KEAP1 region spans residues Asp346–Glu351. 5 positions are modified to phosphoserine: Ser348, Ser354, Ser360, Ser364, and Ser365. Over residues Gly350–Gly372 the composition is skewed to polar residues. The UBA domain occupies Glu388–Ser433. Phosphoserine; by ULK1 and TBK1 is present on Ser402. Ser406 carries the post-translational modification Phosphoserine. N6-acetyllysine; alternate is present on residues Lys419 and Lys434. Lys419 is covalently cross-linked (Glycyl lysine isopeptide (Lys-Gly) (interchain with G-Cter in ubiquitin); alternate). Lys434 participates in a covalent cross-link: Glycyl lysine isopeptide (Lys-Gly) (interchain with G-Cter in SUMO2); alternate.

As to quaternary structure, homooligomer or heterooligomer; may form homotypic arrays. Dimerization interferes with ubiquitin binding. Component of a ternary complex with PAWR and PRKCZ. Forms a complex with JUB/Ajuba, PRKCZ and TRAF6. Identified in a complex with TRAF6 and CYLD. Identified in a heterotrimeric complex with ubiquitin and ZFAND5, where ZFAND5 and SQSTM1 both interact with the same ubiquitin molecule. Interacts (via LIR motif) with MAP1LC3A and MAP1LC3B, as well as with other ATG8 family members, including GABARAP, GABARAPL1 and GABARAPL2; these interactions are necessary for the recruitment MAP1 LC3 family members to inclusion bodies containing polyubiquitinated protein aggregates and for their degradation by autophagy. Interacts directly with PRKCI and PRKCZ. Interacts with EBI3, LCK, RASA1, NR2F2, NTRK1, NTRK2, NTRK3, NBR1, MAP2K5 and MAPKAPK5. Upon TNF-alpha stimulation, interacts with RIPK1 probably bridging IKBKB to the TNF-R1 complex composed of TNF-R1/TNFRSF1A, TRADD and RIPK1. Interacts with the proteasome subunits PSMD4 and PSMC2. Interacts with TRAF6. Interacts with 'Lys-63'-linked polyubiquitinated MAPT/TAU. Interacts with FHOD3. Interacts with CYLD. Interacts with SESN1. Interacts with SESN2. Interacts with ULK1. Interacts with UBD. Interacts with WDR81; the interaction is direct and regulates the interaction of SQSTM1 with ubiquitinated proteins. Interacts with WDFY3; this interaction is required to recruit WDFY3 to cytoplasmic bodies and to PML bodies. Interacts with LRRC25. Interacts with STING1; leading to relocalization of STING1 to autophagosomes. Interacts (when phosphorylated at Ser-348) with KEAP1; the interaction is direct and inactivates the BCR(KEAP1) complex by sequestering KEAP1 in inclusion bodies, promoting its degradation. Interacts with MOAP1; promoting dissociation of SQSTM1 inclusion bodies that sequester KEAP1. Interacts with GBP1. Interacts with TAX1BP1. Interacts with (ubiquitinated) PEX5; specifically binds PEX5 ubiquitinated at 'Lys-209' in response to reactive oxygen species (ROS). Interacts (via PB1 domain) with TNS2; the interaction leads to sequestration of TNS2 in cytoplasmic aggregates with SQSTM1 and promotes TNS2 ubiquitination and proteasomal degradation. Interacts with IRS1; the interaction is disrupted by the presence of tensin TNS2. Interacts with TRIM5. Interacts with TRIM11 (when ubiquitinated); promoting AIM2 recruitment to autophagosomes and autophagy-dependent degradation of AIM2. Interacts with TRIM13. Interacts with TRIM16. Interacts with TRIM23. Interacts with TRIM50. Interacts with TRIM55. Interacts with ECSIT; this interaction inhibits TLR4 signaling via functional regulation of the TRAF6-ECSIT complex. Interacts with GABRR1, GABRR2 and GABRR3. Interacts with WDR83. Interacts with GRB2. Interacts with USP12; the interaction is independent of USP12 deubiquitinase activity and may be involved in regulation of autophagic flux. Interacts with ASB6. In terms of processing, phosphorylated. Phosphorylation at Ser-406 by ULK1 destabilizes the UBA dimer interface and increases binding affinity to ubiquitinated proteins. Phosphorylation at Ser-406 also primes for subsequent phosphorylation at Ser-402. Phosphorylation at Ser-402 by CK2 or ULK1 promotes binding to ubiquitinated proteins by increasing the affinity between the UBA domain and polyubiquitin chains. Phosphorylation at Ser-402 by ULK1 is stimulated by SESN2. Phosphorylated at Ser-402 by TBK1, leading to promote relocalization of 'Lys-63'-linked ubiquitinated STING1 to autophagosomes. Phosphorylation at Ser-348 by ULK1 promotes interaction with KEAP1 and inactivation of the BCR(KEAP1) complex, promoting NFE2L2/NRF2 nuclear accumulation and expression of phase II detoxifying enzymes. Phosphorylated in vitro by TTN. Post-translationally, ubiquitinated by UBE2J1 and RNF26 at Lys-434: ubiquitinated SQSTM1 attracts specific vesicle-associated adapters, forming a molecular bridge that restrains cognate vesicles in the perinuclear region and organizes the endosomal pathway for efficient cargo transport. Ubiquitination by UBE2D2 and UBE2D3 increases its ability to bind polyubiquitin chains by destabilizing the UBA dimer interface. Deubiquitination by USP15 releases target vesicles for fast transport into the cell periphery. Ubiquitinated by the BCR(KEAP1) complex at Lys-419, increasing SQSTM1 sequestering activity and promoting its degradation. Ubiquitinated via 'Lys-29' and 'Lys-33'-linked polyubiquitination leading to xenophagic targeting of bacteria and inhibition of their replication. Acetylated at Lys-419 and Lys-434 by KAT5/TIP60, promotes activity by destabilizing the UBA dimer interface and increases binding affinity to ubiquitinated proteins. Deacetylated by HDAC6. In terms of processing, palmitoylation at Cys-288 by ZDHHC19 is required for efficient autophagic degradation of SQSTM1-cargo complexes by promoting affinity for ATG8 proteins and recruitment of p62 bodies to autophagosomes. Dealmitoylated at Cys-288 by LYPLA1. In terms of tissue distribution, ubiquitously expressed. In brain, mainly expressed by neurons, especially pyramidal neurons in the cerebral cortex and hippocampus. Also expressed by Purkinje cells and neurons in the dentate nucleus of the cerebellum and neurons of the basal ganglia (at protein level).

It is found in the cytoplasmic vesicle. The protein localises to the autophagosome. Its subcellular location is the preautophagosomal structure. The protein resides in the cytoplasm. It localises to the cytosol. It is found in the nucleus. The protein localises to the PML body. Its subcellular location is the late endosome. The protein resides in the lysosome. It localises to the endoplasmic reticulum. It is found in the myofibril. The protein localises to the sarcomere. In terms of biological role, molecular adapter required for selective macroautophagy (aggrephagy) by acting as a bridge between polyubiquitinated proteins and autophagosomes. Promotes the recruitment of ubiquitinated cargo proteins to autophagosomes via multiple domains that bridge proteins and organelles in different steps. SQSTM1 first mediates the assembly and removal of ubiquitinated proteins by undergoing liquid-liquid phase separation upon binding to ubiquitinated proteins via its UBA domain, leading to the formation of insoluble cytoplasmic inclusions, known as p62 bodies. SQSTM1 then interacts with ATG8 family proteins on autophagosomes via its LIR motif, leading to p62 body recruitment to autophagosomes, followed by autophagic clearance of ubiquitinated proteins. SQSTM1 is itself degraded along with its ubiquitinated cargos. Also required to recruit ubiquitinated proteins to PML bodies in the nucleus. Also involved in autophagy of peroxisomes (pexophagy) in response to reactive oxygen species (ROS) by acting as a bridge between ubiquitinated PEX5 receptor and autophagosomes. Acts as an activator of the NFE2L2/NRF2 pathway via interaction with KEAP1: interaction inactivates the BCR(KEAP1) complex by sequestering the complex in inclusion bodies, promoting nuclear accumulation of NFE2L2/NRF2 and subsequent expression of cytoprotective genes. Promotes relocalization of 'Lys-63'-linked ubiquitinated STING1 to autophagosomes. Involved in endosome organization by retaining vesicles in the perinuclear cloud: following ubiquitination by RNF26, attracts specific vesicle-associated adapters, forming a molecular bridge that restrains cognate vesicles in the perinuclear region and organizes the endosomal pathway for efficient cargo transport. Sequesters tensin TNS2 into cytoplasmic puncta, promoting TNS2 ubiquitination and proteasomal degradation. May regulate the activation of NFKB1 by TNF-alpha, nerve growth factor (NGF) and interleukin-1. May play a role in titin/TTN downstream signaling in muscle cells. Adapter that mediates the interaction between TRAF6 and CYLD. Functionally, more potent than isoform 2 to stimulate PRKCZ-dependent phosphorylation of KCNAB2. The sequence is that of Sequestosome-1 (Sqstm1) from Rattus norvegicus (Rat).